Here is a 163-residue protein sequence, read N- to C-terminus: Cyanate hydratase (163 aa).

Active-site residues include R103, E106, and S129.

It belongs to the cyanase family.

The enzyme catalyses cyanate + hydrogencarbonate + 3 H(+) = NH4(+) + 2 CO2. Its function is as follows. Catalyzes the reaction of cyanate with bicarbonate to produce ammonia and carbon dioxide. This is Cyanate hydratase from Paracoccidioides brasiliensis (strain Pb18).